A 1033-amino-acid polypeptide reads, in one-letter code: Isoleucine--tRNA ligase 2 (1033 aa).

Residues 47–57 (PTANGLPHVGH) carry the 'HIGH' region motif. Positions 590 to 594 (KMSKS) match the 'KMSKS' region motif. Lysine 593 serves as a coordination point for ATP.

Belongs to the class-I aminoacyl-tRNA synthetase family. IleS type 2 subfamily. As to quaternary structure, monomer. Requires Zn(2+) as cofactor.

It localises to the cytoplasm. The catalysed reaction is tRNA(Ile) + L-isoleucine + ATP = L-isoleucyl-tRNA(Ile) + AMP + diphosphate. Catalyzes the attachment of isoleucine to tRNA(Ile). As IleRS can inadvertently accommodate and process structurally similar amino acids such as valine, to avoid such errors it has two additional distinct tRNA(Ile)-dependent editing activities. One activity is designated as 'pretransfer' editing and involves the hydrolysis of activated Val-AMP. The other activity is designated 'posttransfer' editing and involves deacylation of mischarged Val-tRNA(Ile). The chain is Isoleucine--tRNA ligase 2 from Bacillus cereus (strain ZK / E33L).